The chain runs to 315 residues: Vomeronasal type-1 receptor 54 (315 aa).

At 1 to 15 (MNKMNRLSHNTEIRN) the chain is on the extracellular side. A helical membrane pass occupies residues 16–40 (AIYSGVGIGISGNSFLLLFHIFKYI). Over 41-51 (RGQRSRHIDLP) the chain is Cytoplasmic. The helical transmembrane segment at 52 to 71 (IGLLSLIHLVMLIAMSLVAT) threads the bilayer. At 72 to 90 (DIFMPWGRWGDTTCKCVIS) the chain is on the extracellular side. Cys85 and Cys172 form a disulfide bridge. Residues 91 to 112 (LYRFCRSLSLCATSLLSILQAV) traverse the membrane as a helical segment. The Cytoplasmic portion of the chain corresponds to 113 to 132 (TLNPRNSCLEKFKRKSPHYM). A helical membrane pass occupies residues 133 to 154 (LGCLLFLSVFYTFISSPLATYI). Over 155-193 (TAKSNLTSPSFTYITTSCSLAPMSYSFHLTVFILLTSRD) the chain is Extracellular. Residues 194–212 (VIFVGLMLLSSGYMVTFLG) traverse the membrane as a helical segment. Residues 213–239 (RHKKQSQFLHITSFSLKPSAEKRAMRT) lie on the Cytoplasmic side of the membrane. Residues 240-260 (ILCLMSFFVLMYTLDSIVSYI) traverse the membrane as a helical segment. The Extracellular segment spans residues 261–267 (RSIDDGQ). A helical transmembrane segment spans residues 268–288 (IFYCVHIFTAHGYATVSPFLI). Topologically, residues 289–315 (LSTEKYIINIFRSTFGRMVTIILLRNR) are cytoplasmic.

Belongs to the G-protein coupled receptor 1 family.

Its subcellular location is the cell membrane. Putative pheromone receptor implicated in the regulation of social and reproductive behavior. The sequence is that of Vomeronasal type-1 receptor 54 (Vmn1r54) from Mus musculus (Mouse).